The sequence spans 271 residues: MDNRPIGLLDSGVGGLTVARELLRQLPNEEIVYIGDTRRAPYGPRSREQIIAFTWDMVNFLLSKDVKMIVMACNTATAMALEIVKEKLDIPVIGVILPGASSAIQKTKTNKIGVIATQASIRSDEYHKTIARKSSAVEVYSLACPKFVSIVESNEMESEIARKVVSESLVPLIGKVDTLILGCTHYPLLRSLIQETMGKEVRLIDSGAEAVRDISVLLNYFSINGQERQPLEHRFYTTAGVNSFREIAEKWLNIGQLQIEHTEIENFNKEK.

Substrate contacts are provided by residues 10 to 11 (DS) and 42 to 43 (YG). Residue Cys-73 is the Proton donor/acceptor of the active site. 74 to 75 (NT) is a binding site for substrate. Cys-183 (proton donor/acceptor) is an active-site residue. A substrate-binding site is contributed by 184-185 (TH).

It belongs to the aspartate/glutamate racemases family.

It carries out the reaction L-glutamate = D-glutamate. It functions in the pathway cell wall biogenesis; peptidoglycan biosynthesis. In terms of biological role, provides the (R)-glutamate required for cell wall biosynthesis. This is Glutamate racemase from Lactococcus lactis subsp. lactis (strain IL1403) (Streptococcus lactis).